Consider the following 241-residue polypeptide: Meiotically up-regulated gene 130 protein (241 aa).

It localises to the mitochondrion. Its function is as follows. Has a role in meiosis. The chain is Meiotically up-regulated gene 130 protein (mug130) from Schizosaccharomyces pombe (strain 972 / ATCC 24843) (Fission yeast).